Reading from the N-terminus, the 472-residue chain is ATP synthase subunit beta (472 aa).

ATP is bound at residue 157 to 164 (GGAGVGKT).

It belongs to the ATPase alpha/beta chains family. F-type ATPases have 2 components, CF(1) - the catalytic core - and CF(0) - the membrane proton channel. CF(1) has five subunits: alpha(3), beta(3), gamma(1), delta(1), epsilon(1). CF(0) has three main subunits: a(1), b(2) and c(9-12). The alpha and beta chains form an alternating ring which encloses part of the gamma chain. CF(1) is attached to CF(0) by a central stalk formed by the gamma and epsilon chains, while a peripheral stalk is formed by the delta and b chains.

It is found in the cell inner membrane. The catalysed reaction is ATP + H2O + 4 H(+)(in) = ADP + phosphate + 5 H(+)(out). In terms of biological role, produces ATP from ADP in the presence of a proton gradient across the membrane. The catalytic sites are hosted primarily by the beta subunits. In Desulfatibacillum aliphaticivorans, this protein is ATP synthase subunit beta.